Here is a 144-residue protein sequence, read N- to C-terminus: Eukaryotic translation initiation factor 1A (144 aa).

The span at 1-15 (MPKNKGKGGKNRKRG) shows a compositional bias: basic residues. 2 disordered regions span residues 1 to 25 (MPKN…DKRE) and 120 to 144 (DVDG…IDKI). Positions 16-25 (KNEADDDKRE) are enriched in basic and acidic residues. Residues 22-96 (DKRELVFKED…DKADVILKYM (75 aa)) enclose the S1-like domain.

Belongs to the eIF-1A family.

In terms of biological role, seems to be required for maximal rate of protein biosynthesis. Enhances ribosome dissociation into subunits and stabilizes the binding of the initiator Met-tRNA(I) to 40 S ribosomal subunits. This Triticum aestivum (Wheat) protein is Eukaryotic translation initiation factor 1A.